Consider the following 139-residue polypeptide: D-ribose pyranase (139 aa).

The active-site Proton donor is the histidine 20. Substrate contacts are provided by residues aspartate 28, histidine 106, and 128 to 130 (YAN).

It belongs to the RbsD / FucU family. RbsD subfamily. As to quaternary structure, homodecamer.

The protein resides in the cytoplasm. The enzyme catalyses beta-D-ribopyranose = beta-D-ribofuranose. It functions in the pathway carbohydrate metabolism; D-ribose degradation; D-ribose 5-phosphate from beta-D-ribopyranose: step 1/2. Catalyzes the interconversion of beta-pyran and beta-furan forms of D-ribose. The sequence is that of D-ribose pyranase from Salmonella agona (strain SL483).